The following is a 473-amino-acid chain: Ribosomal RNA small subunit methyltransferase F (473 aa).

Residues 123–129 (AAAPGSK), glutamate 147, aspartate 174, and aspartate 192 each bind S-adenosyl-L-methionine. The Nucleophile role is filled by cysteine 245.

This sequence belongs to the class I-like SAM-binding methyltransferase superfamily. RsmB/NOP family.

The protein localises to the cytoplasm. It catalyses the reaction cytidine(1407) in 16S rRNA + S-adenosyl-L-methionine = 5-methylcytidine(1407) in 16S rRNA + S-adenosyl-L-homocysteine + H(+). Its function is as follows. Specifically methylates the cytosine at position 1407 (m5C1407) of 16S rRNA. The chain is Ribosomal RNA small subunit methyltransferase F from Vibrio cholerae serotype O1 (strain ATCC 39315 / El Tor Inaba N16961).